We begin with the raw amino-acid sequence, 299 residues long: GTP cyclohydrolase FolE2 (299 aa).

This sequence belongs to the GTP cyclohydrolase IV family.

It catalyses the reaction GTP + H2O = 7,8-dihydroneopterin 3'-triphosphate + formate + H(+). The protein operates within cofactor biosynthesis; 7,8-dihydroneopterin triphosphate biosynthesis; 7,8-dihydroneopterin triphosphate from GTP: step 1/1. In terms of biological role, converts GTP to 7,8-dihydroneopterin triphosphate. The polypeptide is GTP cyclohydrolase FolE2 (Klebsiella pneumoniae).